The primary structure comprises 157 residues: Histone H2B.3 (157 aa).

Residues 1-64 form a disordered region; it reads MAPKKEEKPA…DKKSKKKAKV (64 aa). A compositionally biased stretch (basic residues) spans 26–42; the sequence is KAVKAPKKKEKKAPAKK. Residue lysine 153 forms a Glycyl lysine isopeptide (Lys-Gly) (interchain with G-Cter in ubiquitin) linkage.

The protein belongs to the histone H2B family. The nucleosome is a histone octamer containing two molecules each of H2A, H2B, H3 and H4 assembled in one H3-H4 heterotetramer and two H2A-H2B heterodimers. The octamer wraps approximately 147 bp of DNA. In terms of processing, monoubiquitinated to form H2BK143ub1; may give a specific tag for epigenetic transcriptional activation.

It is found in the nucleus. The protein localises to the chromosome. Core component of nucleosome. Nucleosomes wrap and compact DNA into chromatin, limiting DNA accessibility to the cellular machineries which require DNA as a template. Histones thereby play a central role in transcription regulation, DNA repair, DNA replication and chromosomal stability. DNA accessibility is regulated via a complex set of post-translational modifications of histones, also called histone code, and nucleosome remodeling. In Volvox carteri (Green alga), this protein is Histone H2B.3.